Consider the following 502-residue polypeptide: Glutamate--tRNA ligase (502 aa).

Residues 12-22 (PSPTGYLHVGG) carry the 'HIGH' region motif. The short motif at 259–263 (KLSKR) is the 'KMSKS' region element. Lys-262 contacts ATP.

The protein belongs to the class-I aminoacyl-tRNA synthetase family. Glutamate--tRNA ligase type 1 subfamily. In terms of assembly, monomer.

The protein localises to the cytoplasm. The enzyme catalyses tRNA(Glu) + L-glutamate + ATP = L-glutamyl-tRNA(Glu) + AMP + diphosphate. Its function is as follows. Catalyzes the attachment of glutamate to tRNA(Glu) in a two-step reaction: glutamate is first activated by ATP to form Glu-AMP and then transferred to the acceptor end of tRNA(Glu). This Pelodictyon phaeoclathratiforme (strain DSM 5477 / BU-1) protein is Glutamate--tRNA ligase.